We begin with the raw amino-acid sequence, 545 residues long: Chaperonin GroEL (545 aa).

ATP is bound by residues 30-33 (TLGP), lysine 51, 87-91 (DGTTT), glycine 415, 483-485 (NAA), and aspartate 499.

This sequence belongs to the chaperonin (HSP60) family. In terms of assembly, forms a cylinder of 14 subunits composed of two heptameric rings stacked back-to-back. Interacts with the co-chaperonin GroES.

The protein resides in the cytoplasm. It carries out the reaction ATP + H2O + a folded polypeptide = ADP + phosphate + an unfolded polypeptide.. Together with its co-chaperonin GroES, plays an essential role in assisting protein folding. The GroEL-GroES system forms a nano-cage that allows encapsulation of the non-native substrate proteins and provides a physical environment optimized to promote and accelerate protein folding. The protein is Chaperonin GroEL of Aquifex aeolicus (strain VF5).